Reading from the N-terminus, the 83-residue chain is MSGSTGERSFADIITSIRYWVIHSITIPSLFIAGWLFVSTGLAYDVFGSPRPNEYFTESRQGIPLITGRFDSLEQLDEFSRSF.

The helical transmembrane segment at 21–35 (VIHSITIPSLFIAGW) threads the bilayer. A heme-binding site is contributed by histidine 23.

Belongs to the PsbE/PsbF family. Heterodimer of an alpha subunit and a beta subunit. PSII is composed of 1 copy each of membrane proteins PsbA, PsbB, PsbC, PsbD, PsbE, PsbF, PsbH, PsbI, PsbJ, PsbK, PsbL, PsbM, PsbT, PsbX, PsbY, PsbZ, Psb30/Ycf12, at least 3 peripheral proteins of the oxygen-evolving complex and a large number of cofactors. It forms dimeric complexes. Heme b serves as cofactor.

It localises to the plastid. It is found in the chloroplast thylakoid membrane. This b-type cytochrome is tightly associated with the reaction center of photosystem II (PSII). PSII is a light-driven water:plastoquinone oxidoreductase that uses light energy to abstract electrons from H(2)O, generating O(2) and a proton gradient subsequently used for ATP formation. It consists of a core antenna complex that captures photons, and an electron transfer chain that converts photonic excitation into a charge separation. This Amborella trichopoda protein is Cytochrome b559 subunit alpha.